A 96-amino-acid chain; its full sequence is Protein Vpr (96 aa).

The homooligomerization stretch occupies residues 1 to 42 (MEQAPENQGPQREPYNEWTLELLEELKSEAVRHFPRIWLHSL). A phosphoserine; by host mark is found at serine 79, serine 94, and serine 96.

The protein belongs to the HIV-1 VPR protein family. Homooligomer, may form homodimer. Interacts with p6-gag region of the Pr55 Gag precursor protein through a (Leu-X-X)4 motif near the C-terminus of the P6gag protein. Interacts with host UNG. May interact with host RAD23A/HHR23A. Interacts with host VPRBP/DCAF1, leading to hijack the CUL4A-RBX1-DDB1-DCAF1/VPRBP complex, mediating ubiquitination of host proteins such as TERT and ZGPAT and arrest of the cell cycle in G2 phase. In terms of processing, phosphorylated on several residues by host. These phosphorylations regulate VPR activity for the nuclear import of the HIV-1 pre-integration complex.

The protein localises to the virion. Its subcellular location is the host nucleus. It localises to the host extracellular space. During virus replication, may deplete host UNG protein, and incude G2-M cell cycle arrest. Acts by targeting specific host proteins for degradation by the 26S proteasome, through association with the cellular CUL4A-DDB1 E3 ligase complex by direct interaction with host VPRPB/DCAF-1. Cell cycle arrest reportedly occurs within hours of infection and is not blocked by antiviral agents, suggesting that it is initiated by the VPR carried into the virion. Additionally, VPR induces apoptosis in a cell cycle dependent manner suggesting that these two effects are mechanistically linked. Detected in the serum and cerebrospinal fluid of AIDS patient, VPR may also induce cell death to bystander cells. Functionally, during virus entry, plays a role in the transport of the viral pre-integration (PIC) complex to the host nucleus. This function is crucial for viral infection of non-dividing macrophages. May act directly at the nuclear pore complex, by binding nucleoporins phenylalanine-glycine (FG)-repeat regions. The chain is Protein Vpr from Human immunodeficiency virus type 1 group M subtype B (isolate SF33) (HIV-1).